A 211-amino-acid polypeptide reads, in one-letter code: Abscisic acid receptor PYL7 (211 aa).

An START-like region spans residues 29–180 (HHCRENQCTS…NLKSLACVSE (152 aa)). 2 cysteine pairs are disulfide-bonded: Cys31/Cys161 and Cys36/Cys161. Residues Lys65, 93–98 (ATTSTE), 120–126 (RLKNYSS), and Glu145 each bind abscisate. The short motif at 89–93 (SGLPA) is the Gate loop element. The short motif at 119–121 (HRL) is the Latch loop element.

The protein belongs to the PYR/PYL/RCAR abscisic acid intracellular receptor family. As to quaternary structure, homodimer. Binds ABA on one subunit only. Binds to CARs protein in an ABA-independent manner, both at the plasma membrane and in the nucleus. Interacts with ABI1, and possibly with other PP2Cs.

The protein localises to the cytoplasm. It localises to the nucleus. It is found in the cell membrane. Functionally, receptor for abscisic acid (ABA) required for ABA-mediated responses such as stomatal closure and germination inhibition. Inhibits the activity of group-A protein phosphatases type 2C (PP2Cs) when activated by ABA. The polypeptide is Abscisic acid receptor PYL7 (PYL7) (Arabidopsis thaliana (Mouse-ear cress)).